Here is a 100-residue protein sequence, read N- to C-terminus: Small ribosomal subunit protein uS14c (100 aa).

This sequence belongs to the universal ribosomal protein uS14 family. In terms of assembly, part of the 30S ribosomal subunit.

The protein resides in the plastid. It is found in the chloroplast. Its function is as follows. Binds 16S rRNA, required for the assembly of 30S particles. The protein is Small ribosomal subunit protein uS14c of Pisum sativum (Garden pea).